The sequence spans 337 residues: MFAGIFLRMGAALRSMYVNSKYEEVREEWEEDYSPQRFSYKALYKATKGFKESELFGTEANGTVYKGKLSSNAQIAVKRVSLDAEQDTKHLVSQIVGIGKLRHKNLVQLLGYCRRKGELLLVYDYMPYGNLDDFLFNEERPNLSWSQRFHIIKGVASALLYLHEQIVLHRDVKAANVLLDEDLNGRLDYGLARFGTNRNPMLGSVGYVAPELIITGMPTTKADVYSFGALLLEFACGRMFIEYPGKPEEFNLISWVCQCWKRGNLVGARDARLEGDYVCKEIEMVLKLGLLCAQYNPEDRPSMSQVVNYLEGNDVLPEMPPDTPGISIPTPYHEVLA.

The Protein kinase domain occupies 50–316 (FKESELFGTE…VNYLEGNDVL (267 aa)). Residues 56-64 (FGTEANGTV) and Lys-78 each bind ATP. Tyr-123 bears the Phosphotyrosine mark. The active-site Proton acceptor is Asp-171.

This sequence belongs to the protein kinase superfamily. Ser/Thr protein kinase family.

It catalyses the reaction L-seryl-[protein] + ATP = O-phospho-L-seryl-[protein] + ADP + H(+). It carries out the reaction L-threonyl-[protein] + ATP = O-phospho-L-threonyl-[protein] + ADP + H(+). This chain is Receptor like protein kinase S.3 (LECRKS3), found in Arabidopsis thaliana (Mouse-ear cress).